Consider the following 897-residue polypeptide: MDNFENPLLAPDQDVLLYLLDGYSQLQQLQKQQFNIHDDNINYNNNNNNNNNNNNNNNNNNNNNNNNNNNNNNNNIGSPQIMNENIETNSNDPQYLERLQSIQQQQHQCQTQIQQQLQNYQQQYEDQYQQRQQQYQDQYQKPYSSPPLNFNSIPPITNNNNNNNNNNNNNNNNNNSNSNSNSNSNSNSNSNSNSNSNSNNNNINNNICINNNDISIFLLNNQIQLQPLQQQQQQQQQQQQQQQQQQQQQQQQQQQQQQPTQPTQPTKPIQLTQPIQLTQPTLLEELKDISIQQQLLSAIQQTAQSPQQIHPLQQLQPYQLQSYQQIQASQQLQPYQQLIQLQQLQLQQLEEEKRQQQKQLLLQQQQLQEQQEKLQQQLLQQQKQQLKQKVKQQKQQHQKQQPQQQQQSIQIPPELQNYILNNNNNNNNNNTNKTLSPISEMIQNQFLNNQQTILNQNNSTLQLPTPFYSPQQQQQQHTPISSFIPPPSLPSSPPSPPSPPSPPPQQQQQQQQQQQQQQQQQQQQQQQQQQQQQQQLQQQQLQQQQLQQQHQLKESYESKESIKKYNQNIASRNYRLKKKDYIKEIENKIATLSLENNRLEKENGSIRTNGSIEMMRMEPESMKMLMDGKLIIENIKHALIIDDEKSLIYLLHQYHRTIDQRYSLLEKEVNKLINPYTQLRLCCIGYVPKSSPLVLNIFQGPESDKWLNLFKIEANITPEQSIKIDSLRFQYGKVSSRLSNELLELDLIIKRFFIKNVLPTPDTPLLNSDYYSEGELIPNTTTESIAPLNNFELLDFASKLESLKNKIILNASLGLDTFATLCSILTPKQEALLLVRVNLFCIDLHHHDILGEVWTNVNQISNSLSNPLTSFSDSMKKINFSFLQLDNNNNNYHYKIN.

Disordered stretches follow at residues 38 to 88 (DDNI…NIET) and 128 to 198 (YQQR…NSNS). Residues 44–75 (NNNNNNNNNNNNNNNNNNNNNNNNNNNNNNNN) show a composition bias toward low complexity. Polar residues predominate over residues 76–88 (IGSPQIMNENIET). Residues 94 to 137 (QYLERLQSIQQQQHQCQTQIQQQLQNYQQQYEDQYQQRQQQYQD) are a coiled coil. A compositionally biased stretch (low complexity) spans 128 to 140 (YQQRQQQYQDQYQ). A compositionally biased stretch (polar residues) spans 141–157 (KPYSSPPLNFNSIPPIT). A compositionally biased stretch (low complexity) spans 158–198 (NNNNNNNNNNNNNNNNNNSNSNSNSNSNSNSNSNSNSNSNS). Coiled coils occupy residues 228 to 258 (LQQQQQQQQQQQQQQQQQQQQQQQQQQQQQQ) and 330 to 407 (QQLQ…QQQQ). The interval 461-516 (LQLPTPFYSPQQQQQQHTPISSFIPPPSLPSSPPSPPSPPSPPPQQQQQQQQQQQQ) is disordered. Over residues 484-505 (IPPPSLPSSPPSPPSPPSPPPQ) the composition is skewed to pro residues. The segment covering 506–516 (QQQQQQQQQQQ) has biased composition (low complexity). The bZIP domain maps to 557–620 (ESKESIKKYN…SIEMMRMEPE (64 aa)). A basic motif region spans residues 559 to 564 (KESIKK). A leucine-zipper region spans residues 569 to 576 (IASRNYRL).

This sequence belongs to the bZIP family.

The protein localises to the nucleus. In terms of biological role, probable transcriptional regulator. The chain is Probable basic-leucine zipper transcription factor R (bzpR) from Dictyostelium discoideum (Social amoeba).